The chain runs to 206 residues: Urease accessory protein UreE (206 aa).

The disordered stretch occupies residues 136 to 206 (PEGGAYAEPS…HGHAHAHDRK (71 aa)). Composition is skewed to basic and acidic residues over residues 148–169 (QGHDEHDHHHGHDHHHDHGGHE) and 177–191 (HGHAHDDHVHDEHCG). Residues 192 to 206 (HGHHHHGHAHAHDRK) show a composition bias toward basic residues.

The protein belongs to the UreE family.

The protein resides in the cytoplasm. Its function is as follows. Involved in urease metallocenter assembly. Binds nickel. Probably functions as a nickel donor during metallocenter assembly. This Bradyrhizobium sp. (strain BTAi1 / ATCC BAA-1182) protein is Urease accessory protein UreE.